The following is a 428-amino-acid chain: Trigger factor (428 aa).

The region spanning 165–240 (ADLIKLDAEG…VKEVKRMELP (76 aa)) is the PPIase FKBP-type domain.

It belongs to the FKBP-type PPIase family. Tig subfamily.

The protein resides in the cytoplasm. It catalyses the reaction [protein]-peptidylproline (omega=180) = [protein]-peptidylproline (omega=0). Functionally, involved in protein export. Acts as a chaperone by maintaining the newly synthesized protein in an open conformation. Functions as a peptidyl-prolyl cis-trans isomerase. This is Trigger factor from Prosthecochloris aestuarii (strain DSM 271 / SK 413).